The sequence spans 60 residues: Large ribosomal subunit protein uL30 (60 aa).

The protein belongs to the universal ribosomal protein uL30 family. Part of the 50S ribosomal subunit.

This Cupriavidus metallidurans (strain ATCC 43123 / DSM 2839 / NBRC 102507 / CH34) (Ralstonia metallidurans) protein is Large ribosomal subunit protein uL30.